A 336-amino-acid chain; its full sequence is Dual specificity mitogen-activated protein kinase kinase sek-1 (336 aa).

One can recognise a Protein kinase domain in the interval Leu50–Met311. Residues Leu56–Val64 and Lys79 contribute to the ATP site. Asp176 acts as the Proton acceptor in catalysis. Ser204 is subject to Phosphoserine. At Thr208 the chain carries Phosphothreonine.

Belongs to the protein kinase superfamily. STE Ser/Thr protein kinase family. MAP kinase kinase subfamily. As to quaternary structure, interacts with nsy-1. Interacts with unc-16. Requires Mg(2+) as cofactor. Expressed in linker cell in males.

It catalyses the reaction L-seryl-[protein] + ATP = O-phospho-L-seryl-[protein] + ADP + H(+). It carries out the reaction L-threonyl-[protein] + ATP = O-phospho-L-threonyl-[protein] + ADP + H(+). The catalysed reaction is L-tyrosyl-[protein] + ATP = O-phospho-L-tyrosyl-[protein] + ADP + H(+). Its activity is regulated as follows. Activated by nsy-1-mediated phosphorylation. Functionally, dual specificity protein kinase which acts as an essential component of the p38 signal transduction pathway which is also composed of upstream effector nsy-1 and downstream effector pmk-1. May phosphorylate pmk-1. Downstream of CaMKII unc-43 and adapter protein tir-1, plays a role in determining asymmetric cell fates in olfactory AWC neurons during neuronal development. Activation results in the repression of odorant receptor str-2 expression in one of the 2 AWC neurons. Involved in resistance to pathogenic Gram-positive and Gram-negative bacterial and fungal infection. Involved in resistance to the nematotoxic C.cinerea galectin Cgl2. Probably by promoting pmk-1-mediated activation of skn-1, involved in the up-regulation of gcs-1 and glutathione-S-transferase gst-4 expression upon bacterial infection. Probably downstream of tir-1, required for the expression of antimicrobial peptide nlp-29 in the epidermis in response to fungal infection or physical injury. Regulates susceptibility of B.thuringiensis pore-forming toxin Cry5B and Cry21A. Involved in the response to oxidative stress. May regulate transcription factor daf-16 localization during oxidative stress. By phosphorylating pmk-1, regulates skn-1 localization during oxidative stress. By phosphorylating and activating pmk-1, plays a role in the stabilization of transcription factor rnt-1 in the intestine during oxidative stress. Up-regulates expression of gcs-1 in intestine upon arsenite treatment. Regulates germline proliferation in response to osmotic stress, starvation and germline apoptosis induced by heavy metals, such as Cu(2+). In association with mek-1, regulates germline cell apoptosis in response to oxidative, osmotic and heat shock stresses. Plays a role downstream of tir-1/nsy-1 in regulating susceptibility to anoxia. In males, by regulating pqn-41 expression, involved in non-apoptotic death of the linker cell which guides gonad elongation during larval development. Involved in egg laying. This Caenorhabditis elegans protein is Dual specificity mitogen-activated protein kinase kinase sek-1.